We begin with the raw amino-acid sequence, 303 residues long: Glycine--tRNA ligase alpha subunit (303 aa).

Belongs to the class-II aminoacyl-tRNA synthetase family. Tetramer of two alpha and two beta subunits.

Its subcellular location is the cytoplasm. The catalysed reaction is tRNA(Gly) + glycine + ATP = glycyl-tRNA(Gly) + AMP + diphosphate. The chain is Glycine--tRNA ligase alpha subunit (glyQ) from Escherichia coli (strain K12).